Reading from the N-terminus, the 617-residue chain is Phenylalanine--tRNA ligase beta subunit (617 aa).

A B5 domain is found at 306 to 383; the sequence is IQEKQINAQV…IGYGYDNLKK (78 aa). Mg(2+) contacts are provided by aspartate 361, aspartate 367, glutamate 370, and aspartate 371.

It belongs to the phenylalanyl-tRNA synthetase beta subunit family. Type 2 subfamily. Tetramer of two alpha and two beta subunits. Mg(2+) is required as a cofactor.

Its subcellular location is the cytoplasm. It carries out the reaction tRNA(Phe) + L-phenylalanine + ATP = L-phenylalanyl-tRNA(Phe) + AMP + diphosphate + H(+). The protein is Phenylalanine--tRNA ligase beta subunit (phesB) of Dictyostelium discoideum (Social amoeba).